Here is a 326-residue protein sequence, read N- to C-terminus: Glycerol-3-phosphate dehydrogenase [NAD(P)+] (326 aa).

Residues tryptophan 15, arginine 35, and lysine 107 each coordinate NADPH. The sn-glycerol 3-phosphate site is built by lysine 107, glycine 135, and serine 137. NADPH is bound at residue alanine 139. Residues lysine 190, aspartate 243, serine 253, arginine 254, and asparagine 255 each contribute to the sn-glycerol 3-phosphate site. Residue lysine 190 is the Proton acceptor of the active site. Arginine 254 serves as a coordination point for NADPH. Leucine 273 and glutamate 275 together coordinate NADPH.

This sequence belongs to the NAD-dependent glycerol-3-phosphate dehydrogenase family.

The protein localises to the cytoplasm. The enzyme catalyses sn-glycerol 3-phosphate + NAD(+) = dihydroxyacetone phosphate + NADH + H(+). The catalysed reaction is sn-glycerol 3-phosphate + NADP(+) = dihydroxyacetone phosphate + NADPH + H(+). It functions in the pathway membrane lipid metabolism; glycerophospholipid metabolism. In terms of biological role, catalyzes the reduction of the glycolytic intermediate dihydroxyacetone phosphate (DHAP) to sn-glycerol 3-phosphate (G3P), the key precursor for phospholipid synthesis. The sequence is that of Glycerol-3-phosphate dehydrogenase [NAD(P)+] from Bradyrhizobium sp. (strain BTAi1 / ATCC BAA-1182).